Consider the following 1060-residue polypeptide: Carbamoyl phosphate synthase large chain (1060 aa).

Residues Met1 to Glu401 form a carboxyphosphate synthetic domain region. The ATP site is built by Arg129, Arg169, Gly175, Gly176, Arg208, Ile210, Glu215, Gly241, Ile242, His243, Gln284, and Glu298. The 195-residue stretch at Lys133–Val327 folds into the ATP-grasp 1 domain. Mg(2+)-binding residues include Gln284, Glu298, and Asn300. Positions 284, 298, and 300 each coordinate Mn(2+). Residues Ile402–Ser546 are oligomerization domain. The carbamoyl phosphate synthetic domain stretch occupies residues Leu547 to Tyr929. Positions Glu671–Leu861 constitute an ATP-grasp 2 domain. Residues Arg707, Ala746, Leu748, Glu752, Gly777, Val778, His779, Ser780, Gln820, and Glu832 each coordinate ATP. Mg(2+) is bound by residues Gln820, Glu832, and Asn834. 3 residues coordinate Mn(2+): Gln820, Glu832, and Asn834. The MGS-like domain occupies Leu930–Asp1060. An allosteric domain region spans residues Leu930 to Asp1060.

It belongs to the CarB family. In terms of assembly, composed of two chains; the small (or glutamine) chain promotes the hydrolysis of glutamine to ammonia, which is used by the large (or ammonia) chain to synthesize carbamoyl phosphate. Tetramer of heterodimers (alpha,beta)4. It depends on Mg(2+) as a cofactor. Mn(2+) is required as a cofactor.

It carries out the reaction hydrogencarbonate + L-glutamine + 2 ATP + H2O = carbamoyl phosphate + L-glutamate + 2 ADP + phosphate + 2 H(+). The enzyme catalyses hydrogencarbonate + NH4(+) + 2 ATP = carbamoyl phosphate + 2 ADP + phosphate + 2 H(+). It participates in amino-acid biosynthesis; L-arginine biosynthesis; carbamoyl phosphate from bicarbonate: step 1/1. The protein operates within pyrimidine metabolism; UMP biosynthesis via de novo pathway; (S)-dihydroorotate from bicarbonate: step 1/3. Large subunit of the glutamine-dependent carbamoyl phosphate synthetase (CPSase). CPSase catalyzes the formation of carbamoyl phosphate from the ammonia moiety of glutamine, carbonate, and phosphate donated by ATP, constituting the first step of 2 biosynthetic pathways, one leading to arginine and/or urea and the other to pyrimidine nucleotides. The large subunit (synthetase) binds the substrates ammonia (free or transferred from glutamine from the small subunit), hydrogencarbonate and ATP and carries out an ATP-coupled ligase reaction, activating hydrogencarbonate by forming carboxy phosphate which reacts with ammonia to form carbamoyl phosphate. The polypeptide is Carbamoyl phosphate synthase large chain (Streptococcus agalactiae serotype Ia (strain ATCC 27591 / A909 / CDC SS700)).